A 492-amino-acid chain; its full sequence is N-succinylglutamate 5-semialdehyde dehydrogenase (492 aa).

220–225 serves as a coordination point for NAD(+); sequence GSANTG. Active-site residues include Glu-243 and Cys-277.

This sequence belongs to the aldehyde dehydrogenase family. AstD subfamily.

It catalyses the reaction N-succinyl-L-glutamate 5-semialdehyde + NAD(+) + H2O = N-succinyl-L-glutamate + NADH + 2 H(+). It participates in amino-acid degradation; L-arginine degradation via AST pathway; L-glutamate and succinate from L-arginine: step 4/5. In terms of biological role, catalyzes the NAD-dependent reduction of succinylglutamate semialdehyde into succinylglutamate. This chain is N-succinylglutamate 5-semialdehyde dehydrogenase, found in Escherichia coli O157:H7.